The primary structure comprises 434 residues: Serine--tRNA ligase (434 aa).

239 to 241 (TAE) lines the L-serine pocket. 270-272 (RSE) is a binding site for ATP. Position 293 (Glu-293) interacts with L-serine. 357 to 360 (EISS) is an ATP binding site. Residue Ser-393 coordinates L-serine.

The protein belongs to the class-II aminoacyl-tRNA synthetase family. Type-1 seryl-tRNA synthetase subfamily. Homodimer. The tRNA molecule binds across the dimer.

It is found in the cytoplasm. The enzyme catalyses tRNA(Ser) + L-serine + ATP = L-seryl-tRNA(Ser) + AMP + diphosphate + H(+). It carries out the reaction tRNA(Sec) + L-serine + ATP = L-seryl-tRNA(Sec) + AMP + diphosphate + H(+). It functions in the pathway aminoacyl-tRNA biosynthesis; selenocysteinyl-tRNA(Sec) biosynthesis; L-seryl-tRNA(Sec) from L-serine and tRNA(Sec): step 1/1. Its function is as follows. Catalyzes the attachment of serine to tRNA(Ser). Is also able to aminoacylate tRNA(Sec) with serine, to form the misacylated tRNA L-seryl-tRNA(Sec), which will be further converted into selenocysteinyl-tRNA(Sec). This Mesorhizobium japonicum (strain LMG 29417 / CECT 9101 / MAFF 303099) (Mesorhizobium loti (strain MAFF 303099)) protein is Serine--tRNA ligase.